An 88-amino-acid polypeptide reads, in one-letter code: MWHNVGLTLLVFVATLLIVLLLMVCGWYFVWHLFLSKFKFLRELVGDTGSQEGDNEQPSGSETEEDPSASPQKIRSARQRRPPVDAGH.

A helical membrane pass occupies residues 10 to 30 (LVFVATLLIVLLLMVCGWYFV). The span at 48–61 (TGSQEGDNEQPSGS) shows a compositional bias: polar residues. The segment at 48 to 88 (TGSQEGDNEQPSGSETEEDPSASPQKIRSARQRRPPVDAGH) is disordered. Phosphoserine occurs at positions 59 and 61. T63 is modified (phosphothreonine). The residue at position 70 (S70) is a Phosphoserine.

It belongs to the SMIM13 family.

The protein resides in the membrane. This is Small integral membrane protein 13 (Smim13) from Mus musculus (Mouse).